Here is a 664-residue protein sequence, read N- to C-terminus: MSYLQPPLFTTVSSDWVAPDLSTLPSWEGAKRVAIDCETRDPDLRKLGPGAGRRPNSYITGISFAIEDGPGGYLPIRHEGGGNLPLEGVLAYLRAQAKVFTGDLVGANLPYDLDFLAGDGIEFERVRYFRDIQIADPLICELHDSYSMQAIAERWGFHGKDEALLRAAAVDYGIDPKKDMWMLPAKFVGKYAEEDTRLPLNILRRQEREIDEQDLWGVYNLESKLLPILTGLRRRGVRIDCDRLDMIERWALEKETEALAQVRSITGHRIAVGDVWKPEVIAPALEHIGIKLNKTSQGKPNIDKELLGSIDHPVADLLERARKVNKLRTTFASSVRDHMVNGRLHGTFNQLRRQKDDESDGTAGAAYGRLSSEHPNLQQQPARDEFAMMWRAIYLPEEGQHWASNDYSQQEPRMAVHYACLAKDLIGHQAWLSAIEARDKYRNDPNTDNHQMMADMAGIKRKDAKEIYLGLSYGMGGAKMCRKLGLPTMMAVRGPRFQLFDVNSPEGQRLVAEGARRFEAAGPEGQALLDTFDHKVPFIKKLAKACEARAKAVGYITTLSGRRCRFPKDKDGNYDWTHKGLNRLIQGSSADQTKMAMVACAEAGLDIIIQVHDEIAFSVHDMKEAAEAAHIMRTCTPLELPSKVDVEIGQSWGHSMGWDGNPPS.

Positions 352-378 are disordered; it reads RRQKDDESDGTAGAAYGRLSSEHPNLQ.

This sequence belongs to the DNA polymerase type-A family. DpoZ subfamily.

It catalyses the reaction DNA(n) + a 2'-deoxyribonucleoside 5'-triphosphate = DNA(n+1) + diphosphate. Functionally, DNA polymerase that replicates the viral genomic DNA. Also incorporates 5-hydroxymethyl-2'-deoxyuridine (5-hmdU) instead of dTMP into DNA during replication, as an early step in the pathway of thymidine hypermodifications of the viral genome. As a final result of the pathway of hypermodification, 5-aminoethyl-2'-deoxyuridine (5-NedU) substitutes for about 30% of thymidines in the viral DNA. These modifications probably prevent degradation of viral genome by the host restriction-modification antiviral defense system. In Pseudomonas phage M6, this protein is DNA-directed DNA polymerase (gp62).